Reading from the N-terminus, the 363-residue chain is Chorismate synthase (363 aa).

Arg-48 and Arg-54 together coordinate NADP(+). Residues 125-127 (RSS), 237-238 (NA), Gly-277, 292-296 (KPTSS), and Arg-318 each bind FMN.

Belongs to the chorismate synthase family. As to quaternary structure, homotetramer. FMNH2 is required as a cofactor.

The catalysed reaction is 5-O-(1-carboxyvinyl)-3-phosphoshikimate = chorismate + phosphate. It participates in metabolic intermediate biosynthesis; chorismate biosynthesis; chorismate from D-erythrose 4-phosphate and phosphoenolpyruvate: step 7/7. Its function is as follows. Catalyzes the anti-1,4-elimination of the C-3 phosphate and the C-6 proR hydrogen from 5-enolpyruvylshikimate-3-phosphate (EPSP) to yield chorismate, which is the branch point compound that serves as the starting substrate for the three terminal pathways of aromatic amino acid biosynthesis. This reaction introduces a second double bond into the aromatic ring system. The polypeptide is Chorismate synthase (Ectopseudomonas mendocina (strain ymp) (Pseudomonas mendocina)).